The primary structure comprises 587 residues: Ankyrin repeat and SOCS box protein 14 (587 aa).

ANK repeat units follow at residues isoleucine 82 to glutamate 112, asparagine 117 to alanine 146, glutamate 150 to leucine 179, asparagine 183 to proline 212, tyrosine 216 to leucine 245, aspartate 248 to isoleucine 277, serine 281 to isoleucine 310, serine 313 to phenylalanine 342, histidine 355 to glutamine 384, aspartate 385 to tyrosine 414, and cysteine 416 to arginine 449. Residues tryptophan 521 to aspartate 576 enclose the SOCS box domain.

This sequence belongs to the ankyrin SOCS box (ASB) family. Interacts with MAPRE2; this interaction promotes MAPRE2 degradation.

Its pathway is protein modification; protein ubiquitination. Functionally, may be a substrate-recognition component of a SCF-like ECS (Elongin-Cullin-SOCS-box protein) E3 ubiquitin-protein ligase complex which mediates the ubiquitination and subsequent proteasomal degradation of target proteins. Plays a role in the inhibition of cardiomyocyte nuclear proliferation by mediating the ubiquitination and degradation of MAPRE2. This chain is Ankyrin repeat and SOCS box protein 14 (ASB14), found in Homo sapiens (Human).